The primary structure comprises 208 residues: FMN-dependent NADH:quinone oxidoreductase (208 aa).

99–102 (MWNF) is a binding site for FMN.

Belongs to the azoreductase type 1 family. Homodimer. FMN is required as a cofactor.

The enzyme catalyses 2 a quinone + NADH + H(+) = 2 a 1,4-benzosemiquinone + NAD(+). The catalysed reaction is N,N-dimethyl-1,4-phenylenediamine + anthranilate + 2 NAD(+) = 2-(4-dimethylaminophenyl)diazenylbenzoate + 2 NADH + 2 H(+). Its function is as follows. Quinone reductase that provides resistance to thiol-specific stress caused by electrophilic quinones. Functionally, also exhibits azoreductase activity. Catalyzes the reductive cleavage of the azo bond in aromatic azo compounds to the corresponding amines. The chain is FMN-dependent NADH:quinone oxidoreductase from Brevibacillus brevis (strain 47 / JCM 6285 / NBRC 100599).